Reading from the N-terminus, the 617-residue chain is COMPASS component cclA (617 aa).

2 stretches are compositionally biased toward low complexity: residues 1–19 (MASI…INSP) and 40–50 (SSPAPASNASA). Residues 1-89 (MASIQPAGSS…AKKRATAVQN (89 aa)) are disordered. The span at 57 to 69 (SKRNKRDSRKKRE) shows a compositional bias: basic residues. The B30.2/SPRY domain occupies 157-380 (IADTSFPHIK…YAFNLKETPT (224 aa)). The interval 595 to 617 (TPNTEEPAARPENITVGHDVEMS) is disordered.

It belongs to the cclA family. In terms of assembly, component of the COMPASS complex.

Its subcellular location is the nucleus. It localises to the chromosome. The protein resides in the telomere. Functionally, component of the COMPASS (Set1C) complex that specifically mono-, di- and trimethylates histone H3 to form H3K4me1/2/3, which subsequently plays a role in telomere length maintenance and transcription elongation regulation. Controls the production of several secondary metabolites, including astellolides. The sequence is that of COMPASS component cclA from Aspergillus oryzae (strain ATCC 42149 / RIB 40) (Yellow koji mold).